A 360-amino-acid polypeptide reads, in one-letter code: S-adenosylmethionine:tRNA ribosyltransferase-isomerase (360 aa).

It belongs to the QueA family. In terms of assembly, monomer.

It is found in the cytoplasm. The catalysed reaction is 7-aminomethyl-7-carbaguanosine(34) in tRNA + S-adenosyl-L-methionine = epoxyqueuosine(34) in tRNA + adenine + L-methionine + 2 H(+). It functions in the pathway tRNA modification; tRNA-queuosine biosynthesis. Transfers and isomerizes the ribose moiety from AdoMet to the 7-aminomethyl group of 7-deazaguanine (preQ1-tRNA) to give epoxyqueuosine (oQ-tRNA). The chain is S-adenosylmethionine:tRNA ribosyltransferase-isomerase from Rhizobium rhizogenes (strain K84 / ATCC BAA-868) (Agrobacterium radiobacter).